The chain runs to 194 residues: Ferredoxin, apicoplast (194 aa).

The N-terminal 19 residues, 1-19 (MNIVILLLILTFSIKHSNT), are a transit peptide targeting the apicoplast. In terms of domain architecture, 2Fe-2S ferredoxin-type spans 99–189 (YNITLRTNDG…DCVIETHKED (91 aa)). Positions 135, 140, 143, and 173 each coordinate [2Fe-2S] cluster.

This sequence belongs to the 2Fe2S plant-type ferredoxin family. Requires [2Fe-2S] cluster as cofactor.

It is found in the plastid. It localises to the apicoplast. Ferredoxins are iron-sulfur proteins that transfer electrons in a wide variety of metabolic reactions. By transferring electrons to 4-hydroxy-3-methylbut-2-enyl diphosphate reductase LytB/IspH, plays a role in the terminal step of the DOXP/MEP pathway for isoprenoid precursor biosynthesis. The sequence is that of Ferredoxin, apicoplast from Plasmodium falciparum (isolate 3D7).